The chain runs to 479 residues: Carbohydrate sulfotransferase 3 (479 aa).

At 1–20 (MEKGLTLPQDCRDFVHSLKM) the chain is on the cytoplasmic side. The helical; Signal-anchor for type II membrane protein transmembrane segment at 21–38 (RSKYALFLVFVVIVFVFI) threads the bilayer. Over 39-479 (EKENKIISRV…LEERGTFWVT (441 aa)) the chain is Lumenal. N-linked (GlcNAc...) asparagine glycosylation is found at N63, N74, and N96. A disordered region spans residues 108 to 128 (EAAGEEEEEQRKEEEPPRPAV). Position 141–147 (141–147 (TRTGSSF)) interacts with 3'-phosphoadenylyl sulfate. The N-linked (GlcNAc...) asparagine glycan is linked to N256. 301–309 (RDPRAVLAS) provides a ligand contact to 3'-phosphoadenylyl sulfate. N-linked (GlcNAc...) asparagine glycans are attached at residues N420 and N464.

This sequence belongs to the sulfotransferase 1 family. Gal/GlcNAc/GalNAc subfamily. In terms of processing, N-glycosylated. As to expression, widely expressed in adult tissues. Expressed in heart, placenta, skeletal muscle and pancreas. Also expressed in various immune tissues such as spleen, lymph node, thymus and appendix.

The protein resides in the golgi apparatus membrane. It carries out the reaction chondroitin beta-D-glucuronate + n 3'-phosphoadenylyl sulfate = chondroitin 6'-sulfate + n adenosine 3',5'-bisphosphate + n H(+). The catalysed reaction is 3'-phosphoadenylyl sulfate + keratan = adenosine 3',5'-bisphosphate + keratan 6'-sulfate.. Sulfotransferase that utilizes 3'-phospho-5'-adenylyl sulfate (PAPS) as sulfonate donor to catalyze the transfer of sulfate to position 6 of the N-acetylgalactosamine (GalNAc) residue of chondroitin. Chondroitin sulfate constitutes the predominant proteoglycan present in cartilage and is distributed on the surfaces of many cells and extracellular matrices. Catalyzes with a lower efficiency the sulfation of Gal residues of keratan sulfate, another glycosaminoglycan. Can also catalyze the sulfation of the Gal residues in sialyl N-acetyllactosamine (sialyl LacNAc) oligosaccharides. May play a role in the maintenance of naive T-lymphocytes in the spleen. This is Carbohydrate sulfotransferase 3 (CHST3) from Homo sapiens (Human).